A 181-amino-acid polypeptide reads, in one-letter code: Cyclic AMP-dependent transcription factor ATF-3 (181 aa).

Residues 73–97 (EMSVTKSEAAPEEDERKRRRRERNK) are disordered. Residue Lys78 forms a Glycyl lysine isopeptide (Lys-Gly) (interchain with G-Cter in SUMO2) linkage. A bZIP domain is found at 86–149 (DERKRRRRER…QHLIYMLNLH (64 aa)). The basic motif stretch occupies residues 88–110 (RKRRRRERNKIAAAKCRNKKKEK). Positions 114–142 (LQKESEKLESVNAELKAQIEELKNEKQHL) are leucine-zipper. The residue at position 162 (Thr162) is a Phosphothreonine. A Glycyl lysine isopeptide (Lys-Gly) (interchain with G-Cter in SUMO2) cross-link involves residue Lys175.

This sequence belongs to the bZIP family. ATF subfamily. Binds DNA as a homodimer or a heterodimer. Interacts with KAT5; promoting KAT5 autoacetylation and KAT5 deubiquitination by USP7.

Its subcellular location is the nucleus. This protein binds the cAMP response element (CRE) (consensus: 5'-GTGACGT[AC][AG]-3'), a sequence present in many viral and cellular promoters. Represses transcription from promoters with ATF sites. It may repress transcription by stabilizing the binding of inhibitory cofactors at the promoter. In Mus musculus (Mouse), this protein is Cyclic AMP-dependent transcription factor ATF-3.